We begin with the raw amino-acid sequence, 332 residues long: NADH-quinone oxidoreductase subunit H (332 aa).

A run of 9 helical transmembrane segments spans residues 4 to 24 (FAFFALEALIKCIIIIAIFAS), 44 to 64 (IGPDMVGPFGLIQLVADMIKL), 78 to 98 (FIFAIAPLISAICAFVSLAAI), 120 to 140 (VALLFVIGTSGLCFYAVFLGG), 165 to 185 (VGALALIAIVMLVGSFSLVDI), 194 to 214 (FSWLIFKQPLAFVLFIIALFI), 255 to 275 (IAGAILVTLLFLGGFNSFWII), 279 to 299 (IMMIVKSSFIFFWYFWARAAF), and 312 to 332 (YLILIPLAVLNLLITALAVLL).

Belongs to the complex I subunit 1 family. In terms of assembly, NDH-1 is composed of 14 different subunits. Subunits NuoA, H, J, K, L, M, N constitute the membrane sector of the complex.

It localises to the cell inner membrane. The enzyme catalyses a quinone + NADH + 5 H(+)(in) = a quinol + NAD(+) + 4 H(+)(out). Functionally, NDH-1 shuttles electrons from NADH, via FMN and iron-sulfur (Fe-S) centers, to quinones in the respiratory chain. The immediate electron acceptor for the enzyme in this species is believed to be ubiquinone. Couples the redox reaction to proton translocation (for every two electrons transferred, four hydrogen ions are translocated across the cytoplasmic membrane), and thus conserves the redox energy in a proton gradient. This subunit may bind ubiquinone. The chain is NADH-quinone oxidoreductase subunit H from Campylobacter jejuni subsp. jejuni serotype O:6 (strain 81116 / NCTC 11828).